Here is a 247-residue protein sequence, read N- to C-terminus: C-type lectin domain family 7 member A (247 aa).

At 1–44 the chain is on the cytoplasmic side; the sequence is MEYHPDLENLDEDGYTQLHFDSRSNTRIAVVSEKGSCVASPPWR. The ITAM-like motif lies at 15–18; the sequence is YTQL. Residues 45-65 form a helical; Signal-anchor for type II membrane protein membrane-spanning segment; sequence LIAVILGILCLVILVIAVVLG. Residues 66–247 lie on the Extracellular side of the membrane; the sequence is TMAIWRPNSG…CSICEKKFSM (182 aa). The tract at residues 81–105 is disordered; the sequence is NGYFPSRNKENHSQPTQSPLEESVT. Asn91 carries an N-linked (GlcNAc...) asparagine glycan. The span at 93–105 shows a compositional bias: polar residues; sequence SQPTQSPLEESVT. Intrachain disulfides connect Cys120–Cys131, Cys148–Cys241, and Cys220–Cys233. Residues 127–242 form the C-type lectin domain; sequence YEKSCYLFSP…CSVPSCSICE (116 aa). 146-153 is a binding site for (1,3-beta-D-glucosyl)n; that stretch reads RQCSQLGS. A divalent metal cation is bound by residues Lys157, Asp159, and Glu163. Glu195 provides a ligand contact to (1,3-beta-D-glucosyl)n. Glu242 contacts a divalent metal cation.

As to quaternary structure, homodimer. Interacts with SYK; participates in leukocyte activation in presence of fungal pathogens. Interacts with CD37; this interaction controls CLEC7A-mediated IL-6 production. In terms of processing, phosphorylated on tyrosine residues in response to beta-glucan binding. In terms of tissue distribution, detected in dendritic cells, in paracortical and medullary regions of lymph nodes, and in spleen red pulp and white pulp.

It localises to the cell membrane. Lectin that functions as a pattern recognizing receptor (PRR) specific for beta-1,3-linked and beta-1,6-linked glucans, which constitute cell wall constituents from pathogenic bacteria and fungi. Necessary for the TLR2-mediated inflammatory response and activation of NF-kappa-B: upon beta-glucan binding, recruits SYK via its ITAM motif and promotes a signaling cascade that activates some CARD domain-BCL10-MALT1 (CBM) signalosomes, leading to the activation of NF-kappa-B and MAP kinase p38 (MAPK11, MAPK12, MAPK13 and/or MAPK14) pathways which stimulate expression of genes encoding pro-inflammatory cytokines and chemokines. Enhances cytokine production in macrophages and dendritic cells. Mediates production of reactive oxygen species in the cell. Mediates phagocytosis of C.albicans conidia. Binds T-cells in a way that does not involve their surface glycans and plays a role in T-cell activation. Stimulates T-cell proliferation. Induces phosphorylation of SCIMP after binding beta-glucans. This Macaca mulatta (Rhesus macaque) protein is C-type lectin domain family 7 member A (CLEC7A).